A 569-amino-acid chain; its full sequence is Potassium-transporting ATPase potassium-binding subunit (569 aa).

The next 10 membrane-spanning stretches (helical) occupy residues 3 to 23, 64 to 84, 133 to 153, 179 to 199, 255 to 275, 281 to 301, 375 to 395, 421 to 441, 497 to 517, and 535 to 555; these read TEIL…YPLG, FLKS…ILLV, FVIM…MAGI, ILFP…TPMG, IVEC…LGFY, LGYV…FCNV, FGGV…AVFI, IVSL…SYVW, LALI…AGLL, and VTFG…SFFP.

This sequence belongs to the KdpA family. The system is composed of three essential subunits: KdpA, KdpB and KdpC.

Its subcellular location is the cell inner membrane. Part of the high-affinity ATP-driven potassium transport (or Kdp) system, which catalyzes the hydrolysis of ATP coupled with the electrogenic transport of potassium into the cytoplasm. This subunit binds the periplasmic potassium ions and delivers the ions to the membrane domain of KdpB through an intramembrane tunnel. The sequence is that of Potassium-transporting ATPase potassium-binding subunit from Parabacteroides distasonis (strain ATCC 8503 / DSM 20701 / CIP 104284 / JCM 5825 / NCTC 11152).